Consider the following 320-residue polypeptide: UV DNA damage endonuclease (320 aa).

It belongs to the uve1/UvsE family.

Functionally, component in a DNA repair pathway. Removal of UV LIGHT damaged nucleotides. Recognizes pyrimidine dimers and cleave a phosphodiester bond immediately 5' to the lesion. In Bacillus pumilus (strain SAFR-032), this protein is UV DNA damage endonuclease.